Here is a 95-residue protein sequence, read N- to C-terminus: DASH complex subunit DAD3 (95 aa).

It belongs to the DASH complex DAD3 family. Component of the DASH complex consisting of ASK1, DAD1, DAD2, DAD3, DAD4, DAM1, DUO1, HSK3, SPC19 and SPC34, with a stoichiometry of one copy of each subunit per complex. Multiple DASH complexes oligomerize to form a ring that encircles spindle microtubules and organizes the rod-like NDC80 complexes of the outer kinetochore. DASH complex oligomerization strengthens microtubule attachments. On cytoplasmic microtubules, DASH complexes appear to form patches instead of rings.

The protein resides in the chromosome. It localises to the centromere. It is found in the kinetochore. Its subcellular location is the cytoplasm. The protein localises to the cytoskeleton. The protein resides in the spindle. It localises to the nucleus. Its function is as follows. Component of the DASH complex that connects microtubules with kinetochores and couples microtubule depolymerisation to chromosome movement; it is involved in retrieving kinetochores to the spindle poles before their re-orientation on the spindle in early mitosis and allows microtubule depolymerization to pull chromosomes apart and resist detachment during anaphase. Kinetochores, consisting of a centromere-associated inner segment and a microtubule-contacting outer segment, play a crucial role in chromosome segregation by mediating the physical connection between centromeric DNA and microtubules. Kinetochores also serve as an input point for the spindle assembly checkpoint, which delays anaphase until all chromosomes have bioriented on the mitotic spindle. The sequence is that of DASH complex subunit DAD3 from Chaetomium thermophilum (strain DSM 1495 / CBS 144.50 / IMI 039719) (Thermochaetoides thermophila).